An 81-amino-acid chain; its full sequence is 2,3-bisphosphoglycerate-independent phosphoglycerate mutase (81 aa).

Serine 14 acts as the Phosphoserine intermediate in catalysis. Serine 14 lines the Mn(2+) pocket. Histidine 75 serves as a coordination point for substrate.

This sequence belongs to the BPG-independent phosphoglycerate mutase family. In terms of assembly, monomer. The cofactor is Mn(2+).

It carries out the reaction (2R)-2-phosphoglycerate = (2R)-3-phosphoglycerate. It participates in carbohydrate degradation; glycolysis; pyruvate from D-glyceraldehyde 3-phosphate: step 3/5. Functionally, catalyzes the interconversion of 2-phosphoglycerate and 3-phosphoglycerate. The chain is 2,3-bisphosphoglycerate-independent phosphoglycerate mutase (gpmI) from Tomato big bud phytoplasma.